A 115-amino-acid polypeptide reads, in one-letter code: Putative membrane protein insertion efficiency factor (115 aa).

It belongs to the UPF0161 family.

It localises to the cell membrane. Could be involved in insertion of integral membrane proteins into the membrane. The protein is Putative membrane protein insertion efficiency factor of Mycolicibacterium paratuberculosis (strain ATCC BAA-968 / K-10) (Mycobacterium paratuberculosis).